The chain runs to 68 residues: Peptide Smp13 (68 aa).

The first 23 residues, 1 to 23, serve as a signal peptide directing secretion; it reads MKTQFAIFLITLVLFQMFSQSDA. Residue Phe-36 is modified to Phenylalanine amide. A propeptide spanning residues 37-68 is cleaved from the precursor; that stretch reads GKRGLGDHDDLDELFDGEISQADIDFLKEIMQ.

This sequence belongs to the non-disulfide-bridged peptide (NDBP) superfamily. Short antimicrobial peptide (group 4) family. As to expression, expressed by the venom gland.

It is found in the secreted. Its function is as follows. Peptide with unknown function. Does not show antimicrobial activity against the Gram-positive, and Gram-negative bacteria tested, as well as against the fungus C.albicans. The protein is Peptide Smp13 of Scorpio palmatus (Israeli golden scorpion).